The sequence spans 517 residues: Glycerol kinase 5 (517 aa).

The ATP site is built by Ser23 and Thr24. Positions 93, 270, and 271 each coordinate glycerol. Thr292, Gly335, and Gly432 together coordinate ATP.

It belongs to the FGGY kinase family.

Its subcellular location is the cytoplasm. The enzyme catalyses glycerol + ATP = sn-glycerol 3-phosphate + ADP + H(+). It functions in the pathway polyol metabolism; glycerol degradation via glycerol kinase pathway; sn-glycerol 3-phosphate from glycerol: step 1/1. Functionally, skin-specific kinase that plays a key role in glycerol metabolism, catalyzing its phosphorylation to produce sn-glycerol 3-phosphate. Involved in skin-specific regulation of sterol regulatory element-binding protein (SREBP) processing and lipid biosynthesis. The protein is Glycerol kinase 5 (GK5) of Gallus gallus (Chicken).